The primary structure comprises 351 residues: Probable dual-specificity RNA methyltransferase RlmN (351 aa).

The Proton acceptor role is filled by E98. The Radical SAM core domain occupies 104–332 (TQKRLTVCVS…ASIRRSRGLD (229 aa)). The cysteines at positions 111 and 337 are disulfide-linked. [4Fe-4S] cluster contacts are provided by C118, C122, and C125. S-adenosyl-L-methionine contacts are provided by residues 165 to 166 (GE), S195, 218 to 220 (SLH), and N294. C337 functions as the S-methylcysteine intermediate in the catalytic mechanism.

The protein belongs to the radical SAM superfamily. RlmN family. The cofactor is [4Fe-4S] cluster.

The protein resides in the cytoplasm. It carries out the reaction adenosine(2503) in 23S rRNA + 2 reduced [2Fe-2S]-[ferredoxin] + 2 S-adenosyl-L-methionine = 2-methyladenosine(2503) in 23S rRNA + 5'-deoxyadenosine + L-methionine + 2 oxidized [2Fe-2S]-[ferredoxin] + S-adenosyl-L-homocysteine. The catalysed reaction is adenosine(37) in tRNA + 2 reduced [2Fe-2S]-[ferredoxin] + 2 S-adenosyl-L-methionine = 2-methyladenosine(37) in tRNA + 5'-deoxyadenosine + L-methionine + 2 oxidized [2Fe-2S]-[ferredoxin] + S-adenosyl-L-homocysteine. Its function is as follows. Specifically methylates position 2 of adenine 2503 in 23S rRNA and position 2 of adenine 37 in tRNAs. This Acaryochloris marina (strain MBIC 11017) protein is Probable dual-specificity RNA methyltransferase RlmN.